A 181-amino-acid chain; its full sequence is ATP-dependent protease subunit HslV (181 aa).

Threonine 7 is a catalytic residue. Positions 166, 169, and 172 each coordinate Na(+).

Belongs to the peptidase T1B family. HslV subfamily. A double ring-shaped homohexamer of HslV is capped on each side by a ring-shaped HslU homohexamer. The assembly of the HslU/HslV complex is dependent on binding of ATP.

Its subcellular location is the cytoplasm. It carries out the reaction ATP-dependent cleavage of peptide bonds with broad specificity.. Allosterically activated by HslU binding. Its function is as follows. Protease subunit of a proteasome-like degradation complex believed to be a general protein degrading machinery. The chain is ATP-dependent protease subunit HslV from Variovorax paradoxus (strain S110).